We begin with the raw amino-acid sequence, 335 residues long: Probable cytosolic iron-sulfur protein assembly protein Ciao1 (335 aa).

7 WD repeats span residues G12–K51, G57–N96, G101–C140, P146–D185, S192–G231, Q250–E289, and A301–D335.

It belongs to the WD repeat CIA1 family.

In terms of biological role, essential component of the cytosolic iron-sulfur (Fe/S) protein assembly machinery. Required for the maturation of extramitochondrial Fe/S proteins. The polypeptide is Probable cytosolic iron-sulfur protein assembly protein Ciao1 (Drosophila willistoni (Fruit fly)).